A 25-amino-acid polypeptide reads, in one-letter code: ATP synthase subunit alpha, mitochondrial (25 aa).

The protein belongs to the ATPase alpha/beta chains family. F-type ATPases have 2 components, CF(1) - the catalytic core - and CF(0) - the membrane proton channel. CF(1) has five subunits: alpha(3), beta(3), gamma(1), delta(1), epsilon(1). CF(0) has three main subunits: a, b and c.

Its subcellular location is the mitochondrion. The protein resides in the mitochondrion inner membrane. Functionally, mitochondrial membrane ATP synthase (F(1)F(0) ATP synthase or Complex V) produces ATP from ADP in the presence of a proton gradient across the membrane which is generated by electron transport complexes of the respiratory chain. F-type ATPases consist of two structural domains, F(1) - containing the extramembraneous catalytic core, and F(0) - containing the membrane proton channel, linked together by a central stalk and a peripheral stalk. During catalysis, ATP synthesis in the catalytic domain of F(1) is coupled via a rotary mechanism of the central stalk subunits to proton translocation. Subunits alpha and beta form the catalytic core in F(1). Rotation of the central stalk against the surrounding alpha(3)beta(3) subunits leads to hydrolysis of ATP in three separate catalytic sites on the beta subunits. Subunit alpha does not bear the catalytic high-affinity ATP-binding sites. This chain is ATP synthase subunit alpha, mitochondrial (ATPA), found in Spinacia oleracea (Spinach).